Here is a 123-residue protein sequence, read N- to C-terminus: Large ribosomal subunit protein uL29 (123 aa).

This sequence belongs to the universal ribosomal protein uL29 family.

The chain is Large ribosomal subunit protein uL29 (RPL35) from Theileria lestoquardi.